The sequence spans 270 residues: Acyl-[acyl-carrier-protein]--UDP-N-acetylglucosamine O-acyltransferase (270 aa).

This sequence belongs to the transferase hexapeptide repeat family. LpxA subfamily. In terms of assembly, homotrimer.

The protein resides in the cytoplasm. It catalyses the reaction a (3R)-hydroxyacyl-[ACP] + UDP-N-acetyl-alpha-D-glucosamine = a UDP-3-O-[(3R)-3-hydroxyacyl]-N-acetyl-alpha-D-glucosamine + holo-[ACP]. Its pathway is glycolipid biosynthesis; lipid IV(A) biosynthesis; lipid IV(A) from (3R)-3-hydroxytetradecanoyl-[acyl-carrier-protein] and UDP-N-acetyl-alpha-D-glucosamine: step 1/6. In terms of biological role, involved in the biosynthesis of lipid A, a phosphorylated glycolipid that anchors the lipopolysaccharide to the outer membrane of the cell. This Helicobacter acinonychis (strain Sheeba) protein is Acyl-[acyl-carrier-protein]--UDP-N-acetylglucosamine O-acyltransferase.